The sequence spans 326 residues: Transcription factor bHLH143 (326 aa).

Acidic residues predominate over residues 175-189 (SDDDDNDDWESDDEV). 2 disordered regions span residues 175–194 (SDDD…STGH) and 234–275 (RDSS…EQSR). The span at 255–271 (PESNISSKQETGSGLSD) shows a compositional bias: polar residues. The bHLH domain maps to 263–312 (QETGSGLSDEQSRKDKIHTALRILESVVPGAKGKEALLLLDEAIDYLKLL).

In terms of assembly, homodimer.

The protein localises to the nucleus. In Arabidopsis thaliana (Mouse-ear cress), this protein is Transcription factor bHLH143 (BHLH143).